The chain runs to 411 residues: MAFSFDLAVILQRERRRTKRRRRDLCKSRQPIPEIPFDLVIEILTRLPAKSLMRFKSVSKLWSSLICSRNFTNRLLKLSSPPRLFMCLSSSDNSHLKTVLLSLSSPPDSDITMSSSVIDQDLTMPGMKGYQISHVFRGLMCLVKKSSAQIYNTTTRQLVVLPDIEESTILAEEHKSKKIMYHIGHDPVYDQYKVVCIVSRASDEVEEYTFLSEHWVLLLEGEGSRRWRKISCKYPPHVPLGQGLTLSGRMHYLAWVRVSDNRVLVIFDTHSEEFSMLQVPGDIFWKYNGLLEYGGKIAILNYTKVDIEGVMELWVVEDEEKNLWSSKILVVNPLQLQMVNSIISLTVLGTTRNGEVILVPGPEDKTVFNILLYDLQKNHIRKIEIKGGPDRYLNNIWEVVGMDDVENLMYL.

Residues 29–75 (RQPIPEIPFDLVIEILTRLPAKSLMRFKSVSKLWSSLICSRNFTNRL) enclose the F-box domain.

This Arabidopsis thaliana (Mouse-ear cress) protein is F-box protein At4g19940.